Here is a 1575-residue protein sequence, read N- to C-terminus: Ras GTPase-activating-like protein IQGAP2 (1575 aa).

S16 bears the Phosphoserine mark. Residues 41–156 (LCHLEEAKRW…YCIHALSLYL (116 aa)) form the Calponin-homology (CH) domain. Residue T356 is modified to Phosphothreonine. The 34-residue stretch at 594 to 627 (VSSDGSWLKLNLHKKYDYYYNTDSKESSWVTPES) folds into the WW domain. 3 positions are modified to phosphoserine: S595, S599, and S685. 3 IQ domains span residues 690–719 (QEEN…TFID), 720–749 (NTDS…YFRD), and 750–779 (HNNE…SENP). T716 carries the post-translational modification Phosphothreonine. A phosphothreonine mark is found at T782, T881, T1002, and T1269. Residues 933-1182 (YLLLKLFKTA…QEFRKYFKEA (250 aa)) enclose the Ras-GAP domain. A phosphoserine mark is found at S1271, S1279, S1358, and S1461.

Isoform 2 expression is enhanced in testis.

Binds to activated CDC42 and RAC1 but does not seem to stimulate their GTPase activity. Associates with calmodulin. The protein is Ras GTPase-activating-like protein IQGAP2 (IQGAP2) of Homo sapiens (Human).